Here is a 179-residue protein sequence, read N- to C-terminus: Large ribosomal subunit protein uL5 (179 aa).

Belongs to the universal ribosomal protein uL5 family. As to quaternary structure, part of the 50S ribosomal subunit; part of the 5S rRNA/L5/L18/L25 subcomplex. Contacts the 5S rRNA and the P site tRNA. Forms a bridge to the 30S subunit in the 70S ribosome.

This is one of the proteins that bind and probably mediate the attachment of the 5S RNA into the large ribosomal subunit, where it forms part of the central protuberance. In the 70S ribosome it contacts protein S13 of the 30S subunit (bridge B1b), connecting the 2 subunits; this bridge is implicated in subunit movement. Contacts the P site tRNA; the 5S rRNA and some of its associated proteins might help stabilize positioning of ribosome-bound tRNAs. The chain is Large ribosomal subunit protein uL5 from Rickettsia peacockii (strain Rustic).